The following is a 245-amino-acid chain: Thiopurine S-methyltransferase (245 aa).

S14 bears the Phosphoserine mark. 29–40 (WQDKWVNGKTAF) contacts S-adenosyl-L-methionine. F40 provides a ligand contact to substrate. N6-acetyllysine is present on K58. Residues L69, E90, 134–135 (SI), and R152 each bind S-adenosyl-L-methionine.

Belongs to the class I-like SAM-binding methyltransferase superfamily. TPMT family. As to quaternary structure, monomer.

Its subcellular location is the cytoplasm. The enzyme catalyses S-adenosyl-L-methionine + a thiopurine = S-adenosyl-L-homocysteine + a thiopurine S-methylether.. It carries out the reaction mercaptopurine + S-adenosyl-L-methionine = 6-methylthiopurine + S-adenosyl-L-homocysteine + H(+). The catalysed reaction is 6-thioguanine + S-adenosyl-L-methionine = 6-methylthioguanine + S-adenosyl-L-homocysteine + H(+). Its activity is regulated as follows. Inhibited by S-adenosyl-L-homocysteine (SAH). Catalyzes the S-methylation of thiopurine drugs such as 6-mercaptopurine (also called mercaptopurine, 6-MP or its brand name Purinethol) and 6-thioguanine (also called tioguanine or 6-TG) using S-adenosyl-L-methionine as the methyl donor. TPMT activity modulates the cytotoxic effects of thiopurine prodrugs. A natural substrate for this enzyme has yet to be identified. The sequence is that of Thiopurine S-methyltransferase (TPMT) from Homo sapiens (Human).